The primary structure comprises 702 residues: Ribosomal RNA large subunit methyltransferase K/L (702 aa).

The region spanning 43–154 is the THUMP domain; the sequence is LIYQSLMWSR…KETASIALDL (112 aa).

The protein belongs to the methyltransferase superfamily. RlmKL family.

It localises to the cytoplasm. The catalysed reaction is guanosine(2445) in 23S rRNA + S-adenosyl-L-methionine = N(2)-methylguanosine(2445) in 23S rRNA + S-adenosyl-L-homocysteine + H(+). It catalyses the reaction guanosine(2069) in 23S rRNA + S-adenosyl-L-methionine = N(2)-methylguanosine(2069) in 23S rRNA + S-adenosyl-L-homocysteine + H(+). Functionally, specifically methylates the guanine in position 2445 (m2G2445) and the guanine in position 2069 (m7G2069) of 23S rRNA. The chain is Ribosomal RNA large subunit methyltransferase K/L from Salmonella typhi.